The following is a 260-amino-acid chain: NADH-ubiquinone oxidoreductase chain 6 (260 aa).

The next 6 membrane-spanning stretches (helical) occupy residues 2–22 (LTNY…FMII), 30–50 (SILY…ILGV), 52–72 (FIAI…FLFV), 101–121 (FLFQ…FGLF), 142–162 (VPSG…NLGI), and 211–231 (FFIF…SIIL).

The protein belongs to the complex I subunit 6 family.

The protein localises to the mitochondrion membrane. The enzyme catalyses a ubiquinone + NADH + 5 H(+)(in) = a ubiquinol + NAD(+) + 4 H(+)(out). Core subunit of the mitochondrial membrane respiratory chain NADH dehydrogenase (Complex I) that is believed to belong to the minimal assembly required for catalysis. Complex I functions in the transfer of electrons from NADH to the respiratory chain. The immediate electron acceptor for the enzyme is believed to be ubiquinone. The polypeptide is NADH-ubiquinone oxidoreductase chain 6 (ND6) (Acanthamoeba castellanii (Amoeba)).